The chain runs to 86 residues: Small ribosomal subunit protein bS20 (86 aa).

Positions 1 to 25 (MANIKSQMKRIRTNEAARKRNQSVK) are disordered.

Belongs to the bacterial ribosomal protein bS20 family.

Functionally, binds directly to 16S ribosomal RNA. In Nocardia farcinica (strain IFM 10152), this protein is Small ribosomal subunit protein bS20.